Consider the following 377-residue polypeptide: Leukocyte elastase inhibitor (377 aa).

An N-acetylmethionine modification is found at M1. K136 bears the N6-acetyllysine mark. S298 bears the Phosphoserine mark. Positions 349–377 are CARD-binding motif (CBM); that stretch reads EFVADHPFIFFIRHKPSSNILFLGRLSSP.

Belongs to the serpin family. Ov-serpin subfamily. In terms of assembly, monomer. Interacts (via C-terminus) with CASP1; CASP4 (via CARD domain) and CASP5; these interactions regulate the activity of inflammatory caspases. Interacts with PRTN3. Interacts with GZMH.

The protein localises to the secreted. Its subcellular location is the cytoplasm. The protein resides in the cytolytic granule. It localises to the early endosome. Functionally, neutrophil serine protease inhibitor that plays an essential role in the regulation of the innate immune response, inflammation and cellular homeostasis. Acts primarily to protect the cell from proteases released in the cytoplasm during stress or infection. These proteases are important in killing microbes but when released from granules, these potent enzymes also destroy host proteins and contribute to mortality. Regulates the activity of the neutrophil proteases elastase, cathepsin G, proteinase-3, chymase, chymotrypsin, and kallikrein-3. Also acts as a potent intracellular inhibitor of GZMH by directly blocking its proteolytic activity. During inflammation, limits the activity of inflammatory caspases CASP1, CASP4 and CASP5 by suppressing their caspase-recruitment domain (CARD) oligomerization and enzymatic activation. When secreted, promotes the proliferation of beta-cells via its protease inhibitory function. The protein is Leukocyte elastase inhibitor (SERPINB1) of Bos taurus (Bovine).